Here is a 219-residue protein sequence, read N- to C-terminus: Transmembrane protein 179B (219 aa).

4 helical membrane passes run 9 to 29, 65 to 85, 96 to 116, and 167 to 187; these read VELA…AAMT, FVAG…LFWI, GAIG…LVLV, and TSSW…VVQW. Positions 198 to 219 are disordered; that stretch reads ERGDPEWSSETDALVGSRLSHS. Phosphoserine is present on residues serine 206 and serine 214.

Belongs to the TMEM179 family.

The protein localises to the membrane. The polypeptide is Transmembrane protein 179B (TMEM179B) (Homo sapiens (Human)).